The primary structure comprises 320 residues: Glutaconate CoA-transferase subunit A (320 aa).

Belongs to the 3-oxoacid CoA-transferase subunit A family. Heterooctamer of four A and four B subunits.

It is found in the cytoplasm. The enzyme catalyses trans-glutaconate + acetyl-CoA = (2E)-glutaconyl-CoA + acetate. The protein operates within amino-acid degradation; L-glutamate degradation via hydroxyglutarate pathway; crotonoyl-CoA from L-glutamate: step 3/5. In terms of biological role, catalyzes the transfer of the CoA moiety from acetyl-CoA to (R)-2-hydroxyglutarate and related compounds like glutaconate. The chain is Glutaconate CoA-transferase subunit A (gctA) from Acidaminococcus fermentans (strain ATCC 25085 / DSM 20731 / CCUG 9996 / CIP 106432 / VR4).